Reading from the N-terminus, the 474-residue chain is MTTVPKNAVAKTLYQKVWDAHVVATPEGEAPIIYVDRHLVHEVTSPQAFSGLKVAGRKLRAPEKTFATMDHNTSTRSASLDALSPMARTQVETLAQNCKDFGVRLYDIHHPNQGIVHVMGPELGITFPGTVIVCGDSHTATHGAFGALAFGIGTSEVEHVLATQTLRQLKAKTMKIEVRGHVSDGVTAKDIVLAIIGKIGMDGGTGYVVEFCGEAIEALSMEGRMTVCNMAIEMGAKAGMVAPDQTTFDYLAGREFAPKGEDWAEAVAYWQAIKTDDGAVFDAVVELDAADIAPQLTWGTNPGQVVAIDGKVPNPLDEANPSTRASMEKALEYIGLSAGTPMTDISINKVFIGSCTNSRIEDLRSAAVHAKGRKVASGVTAIVVPGSGQVKAQAEAEGLDKIFIEAGFEWRLPGCSMCLAMNDDRLEAGDRCASTSNRNFEGRQGRGSRTHLVSPAMAAAAAVAGHFVDIRKPY.

Residues Cys355, Cys415, and Cys418 each contribute to the [4Fe-4S] cluster site.

This sequence belongs to the aconitase/IPM isomerase family. LeuC type 1 subfamily. In terms of assembly, heterodimer of LeuC and LeuD. It depends on [4Fe-4S] cluster as a cofactor.

The enzyme catalyses (2R,3S)-3-isopropylmalate = (2S)-2-isopropylmalate. The protein operates within amino-acid biosynthesis; L-leucine biosynthesis; L-leucine from 3-methyl-2-oxobutanoate: step 2/4. Catalyzes the isomerization between 2-isopropylmalate and 3-isopropylmalate, via the formation of 2-isopropylmaleate. This is 3-isopropylmalate dehydratase large subunit from Shewanella putrefaciens (strain CN-32 / ATCC BAA-453).